Consider the following 305-residue polypeptide: Nucleotide-binding protein Rxyl_2009 (305 aa).

Residue 24 to 31 (GLSGAGKS) participates in ATP binding. 75 to 78 (DIRG) serves as a coordination point for GTP.

It belongs to the RapZ-like family.

Displays ATPase and GTPase activities. This chain is Nucleotide-binding protein Rxyl_2009, found in Rubrobacter xylanophilus (strain DSM 9941 / JCM 11954 / NBRC 16129 / PRD-1).